The chain runs to 293 residues: Tumor necrosis factor receptor superfamily member 13B (293 aa).

Residues 1–165 (MSGLGRSRRG…SADQVALVYS (165 aa)) lie on the Extracellular side of the membrane. TNFR-Cys repeat units follow at residues 33–67 (SCPEEQYWDPLLGTCMSCKTICNHQSQRTCAAFCR) and 70–104 (SCRKEQGKFYDHLLRDCISCASICGQHPKQCAYFC). 6 cysteine pairs are disulfide-bonded: Cys34–Cys47, Cys50–Cys62, Cys54–Cys66, Cys71–Cys86, Cys89–Cys100, and Cys93–Cys104. Residues 115–146 (PPELRRQRSGEVENNSDNSGRYQGLEHRGSEA) form a disordered region. Residues 126–135 (VENNSDNSGR) are compositionally biased toward polar residues. N-linked (GlcNAc...) asparagine glycosylation occurs at Asn128. The helical; Signal-anchor for type III membrane protein transmembrane segment at 166–186 (TLGLCLCAVLCCFLVAVACFL) threads the bilayer. The Cytoplasmic segment spans residues 187 to 293 (KKRGDPCSCQ…VPAQEGGPGA (107 aa)). Residues 192–226 (PCSCQPRSRPRQSPAKSSQDHAMEAGSPVSTSPEP) form a disordered region.

Binds TRAF2, TRAF5 and TRAF6. Binds the NH2-terminal domain of CAMLG with its C-terminus. As to expression, highly expressed in spleen, thymus, small intestine and peripheral blood leukocytes. Expressed in resting B-cells and activated T-cells, but not in resting T-cells.

Its subcellular location is the membrane. Functionally, receptor for TNFSF13/APRIL and TNFSF13B/TALL1/BAFF/BLYS that binds both ligands with similar high affinity. Mediates calcineurin-dependent activation of NF-AT, as well as activation of NF-kappa-B and AP-1. Involved in the stimulation of B- and T-cell function and the regulation of humoral immunity. The protein is Tumor necrosis factor receptor superfamily member 13B (TNFRSF13B) of Homo sapiens (Human).